Consider the following 254-residue polypeptide: Triosephosphate isomerase (254 aa).

Asparagine 12–lysine 14 contacts substrate. Residue histidine 99 is the Electrophile of the active site. The active-site Proton acceptor is glutamate 169. Residues glycine 175, serine 214, and glycine 235–glycine 236 each bind substrate.

It belongs to the triosephosphate isomerase family. In terms of assembly, homodimer.

It localises to the cytoplasm. The catalysed reaction is D-glyceraldehyde 3-phosphate = dihydroxyacetone phosphate. The protein operates within carbohydrate biosynthesis; gluconeogenesis. It functions in the pathway carbohydrate degradation; glycolysis; D-glyceraldehyde 3-phosphate from glycerone phosphate: step 1/1. Involved in the gluconeogenesis. Catalyzes stereospecifically the conversion of dihydroxyacetone phosphate (DHAP) to D-glyceraldehyde-3-phosphate (G3P). In Brucella melitensis biotype 1 (strain ATCC 23456 / CCUG 17765 / NCTC 10094 / 16M), this protein is Triosephosphate isomerase.